The sequence spans 309 residues: Homoserine kinase (309 aa).

91-101 (PIGSGLGSSAC) contacts ATP.

The protein belongs to the GHMP kinase family. Homoserine kinase subfamily.

The protein resides in the cytoplasm. The catalysed reaction is L-homoserine + ATP = O-phospho-L-homoserine + ADP + H(+). It functions in the pathway amino-acid biosynthesis; L-threonine biosynthesis; L-threonine from L-aspartate: step 4/5. Catalyzes the ATP-dependent phosphorylation of L-homoserine to L-homoserine phosphate. The polypeptide is Homoserine kinase (Pectobacterium atrosepticum (strain SCRI 1043 / ATCC BAA-672) (Erwinia carotovora subsp. atroseptica)).